A 729-amino-acid chain; its full sequence is DNA topoisomerase 3 (729 aa).

The Toprim domain maps to 3–136 (KSVVIAEKPS…IKRLWISSVT (134 aa)). Residues Glu-9 and Asp-105 each contribute to the Mg(2+) site. The Topo IA-type catalytic domain occupies 153 to 594 (YDNLYASAVA…EMKNYTKEIV (442 aa)). Positions 187-192 (NCGRVQ) are interaction with DNA. Tyr-310 acts as the O-(5'-phospho-DNA)-tyrosine intermediate in catalysis. Residues 686–713 (ERRKKESGNKADKRDVQKYMKQQNKEEE) are compositionally biased toward basic and acidic residues. Residues 686–719 (ERRKKESGNKADKRDVQKYMKQQNKEEEPLNNPF) form a disordered region.

It belongs to the type IA topoisomerase family. Mg(2+) is required as a cofactor.

The enzyme catalyses ATP-independent breakage of single-stranded DNA, followed by passage and rejoining.. In terms of biological role, releases the supercoiling and torsional tension of DNA, which is introduced during the DNA replication and transcription, by transiently cleaving and rejoining one strand of the DNA duplex. Introduces a single-strand break via transesterification at a target site in duplex DNA. The scissile phosphodiester is attacked by the catalytic tyrosine of the enzyme, resulting in the formation of a DNA-(5'-phosphotyrosyl)-enzyme intermediate and the expulsion of a 3'-OH DNA strand. The free DNA strand then undergoes passage around the unbroken strand, thus removing DNA supercoils. Finally, in the religation step, the DNA 3'-OH attacks the covalent intermediate to expel the active-site tyrosine and restore the DNA phosphodiester backbone. The polypeptide is DNA topoisomerase 3 (Bacillus cereus (strain ATCC 14579 / DSM 31 / CCUG 7414 / JCM 2152 / NBRC 15305 / NCIMB 9373 / NCTC 2599 / NRRL B-3711)).